The sequence spans 488 residues: Leucine-rich repeat-containing protein 74A (488 aa).

LRR repeat units follow at residues 134 to 155, 162 to 182, 191 to 212, 219 to 239, 247 to 268, 275 to 296, 303 to 324, and 331 to 351; these read AVTK…SLVE, YLQE…RIIS, SIWS…LLCQ, QIKK…EHLG, GLTS…ALCN, TLTK…ALGE, CLVY…KISK, and SLRV…ILLI.

The chain is Leucine-rich repeat-containing protein 74A from Homo sapiens (Human).